Here is a 65-residue protein sequence, read N- to C-terminus: Large ribosomal subunit protein uL30 (65 aa).

It belongs to the universal ribosomal protein uL30 family. As to quaternary structure, part of the 50S ribosomal subunit.

This Methylobacillus flagellatus (strain ATCC 51484 / DSM 6875 / VKM B-1610 / KT) protein is Large ribosomal subunit protein uL30.